Reading from the N-terminus, the 172-residue chain is Small ribosomal subunit protein uS4 (172 aa).

The region spanning 104–168 (RRLQTIVYRK…SPLAKMAQGG (65 aa)) is the S4 RNA-binding domain.

It belongs to the universal ribosomal protein uS4 family. In terms of assembly, part of the 30S ribosomal subunit. Contacts protein S5. The interaction surface between S4 and S5 is involved in control of translational fidelity.

Its function is as follows. One of the primary rRNA binding proteins, it binds directly to 16S rRNA where it nucleates assembly of the body of the 30S subunit. With S5 and S12 plays an important role in translational accuracy. This Thermofilum pendens (strain DSM 2475 / Hrk 5) protein is Small ribosomal subunit protein uS4.